An 896-amino-acid polypeptide reads, in one-letter code: Rho GTPase-activating protein gacM (896 aa).

Positions 1-97 (MSSFIGWKKN…SSNDTIGKSS (97 aa)) are disordered. Over residues 10–26 (NSNSGGTPGASPTSSSP) the composition is skewed to low complexity. Residues 27–38 (LNSTISNANSVS) are compositionally biased toward polar residues. Composition is skewed to low complexity over residues 45–57 (SISN…LSSS) and 65–97 (NSNN…GKSS). The Rho-GAP domain maps to 139–330 (QPINPNTEFG…LWIEEFDMIS (192 aa)). 4 stretches are compositionally biased toward low complexity: residues 375–391 (IQQQ…QSHP), 400–427 (SSLS…LLPT), 448–460 (PTPT…TPQT), and 473–506 (NNNS…NNNN). Disordered stretches follow at residues 375-514 (IQQQ…GSPL) and 701-770 (LPTG…ENQI). Polar residues predominate over residues 702–711 (PTGSSWSDFE). 2 stretches are compositionally biased toward low complexity: residues 712–743 (NNSS…NSSP) and 751–761 (SNGLNSSSNSN).

It localises to the cytoplasm. Rho GTPase-activating protein involved in the signal transduction pathway. The polypeptide is Rho GTPase-activating protein gacM (gacM) (Dictyostelium discoideum (Social amoeba)).